Reading from the N-terminus, the 546-residue chain is Parathyroid hormone 2 receptor (546 aa).

A signal peptide spans 1–24 (MAWLETFTYICGWLILSSCLLVRA). Residues 27–143 (DSDGTITIEE…GKQEFFESLY (117 aa)) lie on the Extracellular side of the membrane. N-linked (GlcNAc...) asparagine glycosylation is found at asparagine 51, asparagine 106, asparagine 116, and asparagine 121. Residues 144-167 (ILYTVGYSISFGSLAVAILIIGYF) traverse the membrane as a helical segment. Over 168–174 (RRLHCTR) the chain is Cytoplasmic. The chain crosses the membrane as a helical span at residues 175 to 194 (NYIHLHLFVSFMLRAMSIFV). Over 195–235 (KDRVAQAHLGVEALQSLVMQGDLQNFIGGPSVDKSQYVGCK) the chain is Extracellular. The helical transmembrane segment at 236-258 (IAVVMFIYFLATNYYWILVEGLY) threads the bilayer. The Cytoplasmic segment spans residues 259 to 273 (LHNLIFVSFFSDTKY). Residues 274 to 295 (LWGFISIGWGFPAVFVVAWAVA) traverse the membrane as a helical segment. Residues 296–313 (RATLADTRCWELSAGDRW) are Extracellular-facing. A helical transmembrane segment spans residues 314-334 (IYQAPILAAIGLNFILFLNTV). At 335 to 361 (RVLATKIWETNAVGHDMRKQYRKLAKS) the chain is on the cytoplasmic side. Residues 362–380 (TLVLVLVFGVHYIVFVCQP) form a helical membrane-spanning segment. Residues 381–391 (HSFSGLWWEIR) are Extracellular-facing. The helical transmembrane segment at 392 to 414 (MHCELFFNSFQGFFVSIVYCYCN) threads the bilayer. Topologically, residues 415-546 (GEVQAEVKKM…EGCKGETHPI (132 aa)) are cytoplasmic. Residues 497-546 (SEQDCQTHSPPEETKEGHRRQGDDSPVMESSRPVAFTLDTEGCKGETHPI) are disordered. 2 stretches are compositionally biased toward basic and acidic residues: residues 506–519 (PPEETKEGHRRQGD) and 537–546 (EGCKGETHPI).

This sequence belongs to the G-protein coupled receptor 2 family. Binds to TIPF39/TIP39.

It is found in the cell membrane. In terms of biological role, this is a specific receptor for parathyroid hormone. The activity of this receptor is mediated by G proteins which activate adenylyl cyclase. PTH2R may be responsible for PTH effects in a number of physiological systems. It may play a significant role in pancreatic function. PTH2R presence in neurons indicates that it may function as a neurotransmitter receptor. This chain is Parathyroid hormone 2 receptor (Pth2r), found in Mus musculus (Mouse).